We begin with the raw amino-acid sequence, 174 residues long: Ribulose bisphosphate carboxylase small subunit, chloroplastic (174 aa).

A chloroplast-targeting transit peptide spans 1–45; the sequence is MAPTVMASSATSVAPFQGLKSTAGLPVSRRSNASSASVSNGGRIR.

The protein belongs to the RuBisCO small chain family. In terms of assembly, heterohexadecamer of 8 large and 8 small subunits.

Its subcellular location is the plastid. The protein localises to the chloroplast. Functionally, ruBisCO catalyzes two reactions: the carboxylation of D-ribulose 1,5-bisphosphate, the primary event in carbon dioxide fixation, as well as the oxidative fragmentation of the pentose substrate. Both reactions occur simultaneously and in competition at the same active site. Although the small subunit is not catalytic it is essential for maximal activity. In Hordeum vulgare (Barley), this protein is Ribulose bisphosphate carboxylase small subunit, chloroplastic.